The chain runs to 1140 residues: Protein FAM184A (1140 aa).

Coiled coils occupy residues 57–256 (ALNT…NKAQ), 296–800 (AILR…IEME), and 868–907 (RITD…LEFK). Positions 1063–1128 (PNLSALESGG…EASPVASPDP (66 aa)) are disordered.

Belongs to the FAM184 family.

The protein resides in the cytoplasm. The protein localises to the P-body. Its subcellular location is the cytoskeleton. It localises to the microtubule organizing center. It is found in the centrosome. The protein resides in the centriolar satellite. The polypeptide is Protein FAM184A (Homo sapiens (Human)).